We begin with the raw amino-acid sequence, 601 residues long: DNA ligase (601 aa).

Asp258 serves as a coordination point for ATP. The active-site N6-AMP-lysine intermediate is Lys260. ATP contacts are provided by Arg265, Arg280, Glu310, Phe350, Arg427, and Lys433. Residues 568-601 form a disordered region; sequence DKSPEDATTTDEILEMYNKQPKKKIESPPIDESV.

It belongs to the ATP-dependent DNA ligase family. The cofactor is Mg(2+).

It catalyses the reaction ATP + (deoxyribonucleotide)n-3'-hydroxyl + 5'-phospho-(deoxyribonucleotide)m = (deoxyribonucleotide)n+m + AMP + diphosphate.. DNA ligase that seals nicks in double-stranded DNA during DNA replication, DNA recombination and DNA repair. The polypeptide is DNA ligase (Saccharolobus islandicus (strain L.S.2.15 / Lassen #1) (Sulfolobus islandicus)).